The following is a 404-amino-acid chain: LL-diaminopimelate aminotransferase (404 aa).

Substrate contacts are provided by Tyr15 and Gly42. Pyridoxal 5'-phosphate-binding positions include Tyr72, Ala108–Lys109, Tyr132, Asn188, Tyr219, and Ser247–Ser249. Residues Lys109, Tyr132, and Asn188 each coordinate substrate. An N6-(pyridoxal phosphate)lysine modification is found at Lys250. Residues Arg258 and Asn288 each contribute to the pyridoxal 5'-phosphate site. Residues Asn288 and Arg384 each contribute to the substrate site.

This sequence belongs to the class-I pyridoxal-phosphate-dependent aminotransferase family. LL-diaminopimelate aminotransferase subfamily. In terms of assembly, homodimer. It depends on pyridoxal 5'-phosphate as a cofactor.

It catalyses the reaction (2S,6S)-2,6-diaminopimelate + 2-oxoglutarate = (S)-2,3,4,5-tetrahydrodipicolinate + L-glutamate + H2O + H(+). It functions in the pathway amino-acid biosynthesis; L-lysine biosynthesis via DAP pathway; LL-2,6-diaminopimelate from (S)-tetrahydrodipicolinate (aminotransferase route): step 1/1. Involved in the synthesis of meso-diaminopimelate (m-DAP or DL-DAP), required for both lysine and peptidoglycan biosynthesis. Catalyzes the direct conversion of tetrahydrodipicolinate to LL-diaminopimelate. The chain is LL-diaminopimelate aminotransferase from Lachnospira eligens (strain ATCC 27750 / DSM 3376 / VPI C15-48 / C15-B4) (Eubacterium eligens).